The primary structure comprises 166 residues: RNA pyrophosphohydrolase (166 aa).

In terms of domain architecture, Nudix hydrolase spans 6-149 (GFRPNVGIIL…KRDVYRKAMM (144 aa)). Residues 38-59 (GGIHFGETPEQALYRELREEVG) carry the Nudix box motif.

Belongs to the Nudix hydrolase family. RppH subfamily. It depends on a divalent metal cation as a cofactor.

Functionally, accelerates the degradation of transcripts by removing pyrophosphate from the 5'-end of triphosphorylated RNA, leading to a more labile monophosphorylated state that can stimulate subsequent ribonuclease cleavage. This Acinetobacter baylyi (strain ATCC 33305 / BD413 / ADP1) protein is RNA pyrophosphohydrolase.